The sequence spans 253 residues: Core protein VP8 (253 aa).

A propeptide spanning residues 1 to 31 (MNDLLLENLFGEKALCAQVTRDQLLEIIAAG) is cleaved from the precursor.

Belongs to the chordopoxvirinae VP8 family. Undergoes morphogenesis-associated proteolysis which cleaves the 28 kDa to a 25-kDa product. Proteolytic cleavage of major core proteins P4a (A10L), P4b (A3L), and VP8 (L4R), which occurs at a late stage of core formation, is required for production of infectious mature virions (MV).

The protein resides in the virion. Major core structural protein. The chain is Core protein VP8 from Vertebrata (FPV).